A 760-amino-acid polypeptide reads, in one-letter code: Xaa-Pro dipeptidyl-peptidase (760 aa).

Active-site charge relay system residues include S349, D469, and H499.

Belongs to the peptidase S15 family. In terms of assembly, homodimer.

It localises to the cytoplasm. It catalyses the reaction Hydrolyzes Xaa-Pro-|- bonds to release unblocked, N-terminal dipeptides from substrates including Ala-Pro-|-p-nitroanilide and (sequentially) Tyr-Pro-|-Phe-Pro-|-Gly-Pro-|-Ile.. Removes N-terminal dipeptides sequentially from polypeptides having unsubstituted N-termini provided that the penultimate residue is proline. This Streptococcus pyogenes serotype M12 (strain MGAS9429) protein is Xaa-Pro dipeptidyl-peptidase.